The sequence spans 185 residues: Photosystem I assembly protein Ycf4 (185 aa).

The next 2 helical transmembrane spans lie at Asn21–Tyr43 and Gly63–Leu85.

Belongs to the Ycf4 family.

It is found in the plastid. It localises to the chloroplast thylakoid membrane. Its function is as follows. Seems to be required for the assembly of the photosystem I complex. This chain is Photosystem I assembly protein Ycf4, found in Aegilops crassa (Persian goatgrass).